A 293-amino-acid chain; its full sequence is Ribosomal protein L11 methyltransferase (293 aa).

Threonine 145, glycine 166, aspartate 188, and asparagine 230 together coordinate S-adenosyl-L-methionine.

Belongs to the methyltransferase superfamily. PrmA family.

It is found in the cytoplasm. It catalyses the reaction L-lysyl-[protein] + 3 S-adenosyl-L-methionine = N(6),N(6),N(6)-trimethyl-L-lysyl-[protein] + 3 S-adenosyl-L-homocysteine + 3 H(+). Methylates ribosomal protein L11. The chain is Ribosomal protein L11 methyltransferase from Shewanella frigidimarina (strain NCIMB 400).